The chain runs to 541 residues: Protein wntless homolog (541 aa).

The Cytoplasmic portion of the chain corresponds to 1 to 15 (MAGAIIENMSTKKLC). A helical transmembrane segment spans residues 16–36 (IVGGILLVFQIVAFLVGGLIA). The Lumenal segment spans residues 37–232 (PAPTTAVPYT…GIHQNGGFTK (196 aa)). Positions 101-232 (MEMSPWFQFM…GIHQNGGFTK (132 aa)) are interaction with Wnt proteins. Residues 233 to 253 (VWFAMKTFLTPSIFIIMVWYW) traverse the membrane as a helical segment. At 254–268 (RRITMMSRPPVLLEK) the chain is on the cytoplasmic side. The helical transmembrane segment at 269-289 (VIFALGISMTFINIPVEWFSI) threads the bilayer. Residues 290–303 (GFDWTWMLLFGDIR) lie on the Lumenal side of the membrane. A helical transmembrane segment spans residues 304 to 324 (QGIFYAMLLSFWIIFCGEHMM). Topologically, residues 325–331 (DQHERNH) are cytoplasmic. A helical transmembrane segment spans residues 332–352 (IAGYWKQVGPIAVGSFCLFIF). The Lumenal segment spans residues 353 to 380 (DMCERGVQLTNPFYSIWTTDVGTELAMA). A helical membrane pass occupies residues 381-401 (FIIVAGICLCLYFLFLCFMVF). Over 402–431 (QVFRNISGKQSSLPAMSKVRRLHYEGLIFR) the chain is Cytoplasmic. The helical transmembrane segment at 432 to 452 (FKFLMLITLACAAMTVIFFIV) threads the bilayer. The Lumenal segment spans residues 453–471 (SQVSEGHWKWGGVTVQVSS). A helical transmembrane segment spans residues 472-492 (AFFTGIYGMWNLYVFALMFLY). Topologically, residues 493 to 541 (APSHKNYGEDQSNGDLGVHSGEELQLTTTITHVDGPTEIYKLTRKEAQE) are cytoplasmic.

The protein belongs to the wntless family. As to quaternary structure, interacts with WNT3A. Interacts with WNT1, WNT3 and WNT5. N-glycosylated. In terms of tissue distribution, expressed in the brain, skeletal muscle, heart muscle, lung, gut, liver, and kidney (at protein level). In the brain, expressed in the cortex, striatum, hippocampus and to a lesser extent in the cerebellum (at protein level). Expressed in kidney, lung, skin, intestine, brain, spinal cord, skeleton, eyes, excretion glands, tooth and palatal shelves. In the cerebellum, expressed in Purkinje cells.

It is found in the golgi apparatus membrane. Its subcellular location is the cytoplasmic vesicle membrane. The protein localises to the cell membrane. It localises to the endoplasmic reticulum membrane. The protein resides in the early endosome membrane. Its function is as follows. Regulates Wnt proteins sorting and secretion in a feedback regulatory mechanism. This reciprocal interaction plays a key role in the regulation of expression, subcellular location, binding and organelle-specific association of Wnt proteins. Also plays an important role in establishment of the anterior-posterior body axis formation during development. The chain is Protein wntless homolog (Wls) from Mus musculus (Mouse).